We begin with the raw amino-acid sequence, 130 residues long: Small ribosomal subunit protein uS8 (130 aa).

This sequence belongs to the universal ribosomal protein uS8 family.

The protein localises to the cytoplasm. This chain is Small ribosomal subunit protein uS8 (RPS15A), found in Daucus carota (Wild carrot).